We begin with the raw amino-acid sequence, 371 residues long: Dead end protein homolog 1 (371 aa).

RRM domains are found at residues Pro-85–Gly-163 and Pro-165–Ser-245.

It localises to the nucleus. The protein resides in the cytoplasm. Functionally, RNA-binding factor that positively regulates gene expression by prohibiting miRNA-mediated gene suppression. Relieves miRNA repression in germline cells. Prohibits the function of several miRNAs by blocking the accessibility of target mRNAs. Sequence-specific RNA-binding factor that binds to U-rich regions (URRs) in the 3'untranslated region (3'-UTR) of several mRNAs. Does not bind to miRNAs. May play a role during early embryonic survival. The polypeptide is Dead end protein homolog 1 (dnd1) (Xenopus laevis (African clawed frog)).